The sequence spans 189 residues: Glucose-6-phosphate isomerase (189 aa).

Residues H88, H90, E97, and H136 each contribute to the Fe cation site.

It belongs to the archaeal-type GPI family. Homodimer.

It localises to the cytoplasm. The enzyme catalyses alpha-D-glucose 6-phosphate = beta-D-fructose 6-phosphate. Its pathway is carbohydrate degradation; glycolysis; D-glyceraldehyde 3-phosphate and glycerone phosphate from D-glucose: step 2/4. In Thermococcus onnurineus (strain NA1), this protein is Glucose-6-phosphate isomerase.